A 92-amino-acid polypeptide reads, in one-letter code: Small ribosomal subunit protein uS19c (92 aa).

The protein belongs to the universal ribosomal protein uS19 family.

The protein localises to the plastid. The protein resides in the chloroplast. Functionally, protein S19 forms a complex with S13 that binds strongly to the 16S ribosomal RNA. The chain is Small ribosomal subunit protein uS19c from Chaetosphaeridium globosum (Charophycean green alga).